The following is a 300-amino-acid chain: NADH-cytochrome b5 reductase 1 (300 aa).

Residues 8–28 (PLVVFATVATIIISFVTLYFF) traverse the membrane as a helical segment. Low complexity predominate over residues 34-45 (SSTTSSSSSSSS). Residues 34–54 (SSTTSSSSSSSSKSKKGSPAL) form a disordered region. The region spanning 57–160 (DKFQKFPLIS…RGPKGFFTYT (104 aa)) is the FAD-binding FR-type domain. FAD-binding positions include 140–155 (AEKQ…GPKG) and 166–198 (SLGL…KVHL).

It belongs to the flavoprotein pyridine nucleotide cytochrome reductase family. As to quaternary structure, monomer. Component of the 2-(3-amino-3-carboxypropyl)histidine synthase complex composed of DPH1, DPH2, DPH3 and a NADH-dependent reductase, predominantly CBR1. FAD serves as cofactor.

It localises to the mitochondrion outer membrane. It carries out the reaction 2 Fe(III)-[cytochrome b5] + NADH = 2 Fe(II)-[cytochrome b5] + NAD(+) + H(+). It catalyses the reaction 2 Fe(3+)-[Dph3] + NADH = 2 Fe(2+)-[Dph3] + NAD(+) + H(+). It functions in the pathway protein modification; peptidyl-diphthamide biosynthesis. NADH-dependent reductase for DPH3 and cytochrome b5. Required for the first step of diphthamide biosynthesis, a post-translational modification of histidine which occurs in elongation factor 2. DPH1 and DPH2 transfer a 3-amino-3-carboxypropyl (ACP) group from S-adenosyl-L-methionine (SAM) to a histidine residue, the reaction is assisted by a reduction system comprising DPH3 and a NADH-dependent reductase, predominantly CBR1. By reducing DPH3, also involved in the formation of the tRNA wobble base modification mcm5s 2U (5-methoxycarbonylmethyl-2-thiouridine), mediated by the elongator complex. The cytochrome b5/NADH cytochrome b5 reductase electron transfer system supports the catalytic activity of several sterol biosynthetic enzymes. The sequence is that of NADH-cytochrome b5 reductase 1 (CBR1) from Lodderomyces elongisporus (strain ATCC 11503 / CBS 2605 / JCM 1781 / NBRC 1676 / NRRL YB-4239) (Yeast).